Reading from the N-terminus, the 207-residue chain is Small ribosomal subunit protein uS3 (207 aa).

The 70-residue stretch at isoleucine 17–lysine 86 folds into the KH type-2 domain.

This sequence belongs to the universal ribosomal protein uS3 family. In terms of assembly, part of the 30S ribosomal subunit.

Functionally, binds the lower part of the 30S subunit head. This chain is Small ribosomal subunit protein uS3, found in Thermococcus sibiricus (strain DSM 12597 / MM 739).